We begin with the raw amino-acid sequence, 299 residues long: GTPase Era (299 aa).

An Era-type G domain is found at 5-175 (RSGFVCFVGR…TDVLAGKLPP (171 aa)). A G1 region spans residues 13-20 (GRPNTGKS). 13-20 (GRPNTGKS) serves as a coordination point for GTP. The tract at residues 39–43 (QTTRH) is G2. Residues 60 to 63 (DTPG) form a G3 region. Residues 60-64 (DTPGL) and 124-127 (TKID) contribute to the GTP site. The G4 stretch occupies residues 124-127 (TKID). The interval 154 to 156 (VSA) is G5. The KH type-2 domain maps to 206 to 285 (VRDELPHSLA…YLDLRVKIAK (80 aa)).

Belongs to the TRAFAC class TrmE-Era-EngA-EngB-Septin-like GTPase superfamily. Era GTPase family. In terms of assembly, monomer.

It localises to the cell envelope. It is found in the secreted. Its subcellular location is the cell wall. In terms of biological role, exhibits GTPase activity. Binds RNA but is probably not involved in ribosome assembly in mycobacteria. This Mycobacterium sp. (strain JLS) protein is GTPase Era.